A 312-amino-acid chain; its full sequence is Glyoxylate/hydroxypyruvate reductase A (312 aa).

Arg-227 is an active-site residue. His-275 functions as the Proton donor in the catalytic mechanism.

It belongs to the D-isomer specific 2-hydroxyacid dehydrogenase family. GhrA subfamily.

The protein localises to the cytoplasm. It catalyses the reaction glycolate + NADP(+) = glyoxylate + NADPH + H(+). It carries out the reaction (R)-glycerate + NAD(+) = 3-hydroxypyruvate + NADH + H(+). The catalysed reaction is (R)-glycerate + NADP(+) = 3-hydroxypyruvate + NADPH + H(+). Functionally, catalyzes the NADPH-dependent reduction of glyoxylate and hydroxypyruvate into glycolate and glycerate, respectively. The protein is Glyoxylate/hydroxypyruvate reductase A of Klebsiella pneumoniae (strain 342).